The primary structure comprises 382 residues: RIB43A-like with coiled-coils protein 2 (382 aa).

A coiled-coil region spans residues Asn222–Asp255.

It belongs to the RIB43A family. In terms of assembly, microtubule inner protein component of sperm flagellar doublet microtubules. In terms of tissue distribution, expressed in airway epithelial cells.

Its subcellular location is the cytoplasm. The protein resides in the cytoskeleton. It localises to the cilium axoneme. The protein localises to the flagellum axoneme. Functionally, microtubule inner protein (MIP) part of the dynein-decorated doublet microtubules (DMTs) in cilia axoneme, which is required for motile cilia beating. This chain is RIB43A-like with coiled-coils protein 2, found in Homo sapiens (Human).